We begin with the raw amino-acid sequence, 161 residues long: uncharacterized protein (161 aa).

Over residues methionine 1–proline 10 the composition is skewed to polar residues. 3 disordered regions span residues methionine 1 to glutamine 20, lysine 55 to glutamate 84, and leucine 118 to serine 161. Residues serine 82 to alanine 107 are a coiled coil. Residues glutamine 144–serine 161 show a composition bias toward low complexity.

This is an uncharacterized protein from Caenorhabditis elegans.